A 672-amino-acid polypeptide reads, in one-letter code: MADGSLTGGGLEAAAMAPERMGWAVEQELASLEKGLFQDEDSCSDCSYRDKPGSSLQSFMPEGKTFFPEIFQTNQLLFYERFRAYQDYILADCKASEVQEFTAEFLEKVLEPSGWRAVWHTNVFKVLVEITDVDFAALKAVVRLAEPYLCDSQVSTFTMECMKELLDLKEHRLPLQELWVVFDDSGVFDQTALAIEHVRFFYQNIWRSWDEEEEDEYDYFVRCVEPRLRLHYDILEDRVPSGLIVDYHNLLSQCEESYRKFLNLRSSLSNCNSDSEQENISMVEGLKLYSEMEQLKQKLKLIENPLLRYVFGYQKNSNIQAKGVRSSGQKITHVVSSTMMAGLLRSLLTDRLCQEPGEEEREIQFHSDPLSAINACFEGDTVIVCPGHYVVHGTFSIADSIELEGYGLPDDIVIEKRGKGDTFVDCTGADIKISGIKFVQHDAVEGILIVHRGKTTLENCVLQCETTGVTVRTSAEFLMKNSDLYGAKGAGIEIYPGSQCTLSDNGIHHCKEGILIKDFLDEHYDIPKISMVNNIIHNNEGYGVVLVKPTIFSDLQENAEDGTEENKALKIQTSGEPDVAERVDLEELIECATGKMELCARTDPSEQVEGNCEIVNELIAASTQKGQIKKKRLSELGITQADDNLMSQEMFVGIVGNQFKWNGKGSFGTFLF.

N-acetylalanine is present on A2. The residue at position 5 (S5) is a Phosphoserine. The residue at position 7 (T7) is a Phosphothreonine. A phosphoserine mark is found at S31, S42, S44, S47, and S273. PbH1 repeat units lie at residues 428–451 (GADI…LIVH), 452–473 (RGKT…TVRT), 474–496 (SAEF…EIYP), 497–518 (GSQC…LIKD), and 526–548 (IPKI…VLVK). S634 is subject to Phosphoserine.

Interacts directly with isoform p52shc of SHC1 via its SH2 domain. Interacts with TRIM71; leading to enhanced SHCBP1 protein stability. Interacts with both members of the centralspindlin complex, KIF23 and RACGAP1.

Its subcellular location is the midbody. The protein resides in the cytoplasm. It is found in the cytoskeleton. The protein localises to the spindle. Its function is as follows. May play a role in signaling pathways governing cellular proliferation, cell growth and differentiation. May be a component of a novel signaling pathway downstream of Shc. Acts as a positive regulator of FGF signaling in neural progenitor cells. The polypeptide is SHC SH2 domain-binding protein 1 (SHCBP1) (Homo sapiens (Human)).